The primary structure comprises 423 residues: Adenosylmethionine-8-amino-7-oxononanoate aminotransferase (423 aa).

W51 lines the substrate pocket. Residue 111–112 (GS) coordinates pyridoxal 5'-phosphate. Y144 contacts substrate. A pyridoxal 5'-phosphate-binding site is contributed by D243. Positions 272 and 306 each coordinate substrate. At K272 the chain carries N6-(pyridoxal phosphate)lysine. 307–308 (PT) contributes to the pyridoxal 5'-phosphate binding site. A substrate-binding site is contributed by R390.

Belongs to the class-III pyridoxal-phosphate-dependent aminotransferase family. BioA subfamily. In terms of assembly, homodimer. It depends on pyridoxal 5'-phosphate as a cofactor.

The protein resides in the cytoplasm. It carries out the reaction (8S)-8-amino-7-oxononanoate + S-adenosyl-L-methionine = S-adenosyl-4-methylsulfanyl-2-oxobutanoate + (7R,8S)-7,8-diammoniononanoate. It functions in the pathway cofactor biosynthesis; biotin biosynthesis; 7,8-diaminononanoate from 8-amino-7-oxononanoate (SAM route): step 1/1. Functionally, catalyzes the transfer of the alpha-amino group from S-adenosyl-L-methionine (SAM) to 7-keto-8-aminopelargonic acid (KAPA) to form 7,8-diaminopelargonic acid (DAPA). It is the only aminotransferase known to utilize SAM as an amino donor. In Corynebacterium glutamicum (strain ATCC 13032 / DSM 20300 / JCM 1318 / BCRC 11384 / CCUG 27702 / LMG 3730 / NBRC 12168 / NCIMB 10025 / NRRL B-2784 / 534), this protein is Adenosylmethionine-8-amino-7-oxononanoate aminotransferase.